Consider the following 310-residue polypeptide: Tagatose-6-phosphate kinase (310 aa).

This sequence belongs to the carbohydrate kinase PfkB family. LacC subfamily.

It catalyses the reaction D-tagatofuranose 6-phosphate + ATP = D-tagatofuranose 1,6-bisphosphate + ADP + H(+). The protein operates within carbohydrate metabolism; D-tagatose 6-phosphate degradation; D-glyceraldehyde 3-phosphate and glycerone phosphate from D-tagatose 6-phosphate: step 1/2. In Staphylococcus epidermidis (strain ATCC 12228 / FDA PCI 1200), this protein is Tagatose-6-phosphate kinase.